Here is a 212-residue protein sequence, read N- to C-terminus: External core antigen (212 aa).

The signal sequence occupies residues 1–19 (MQLFHLCLIISCSCPTVQA). Residues 25 to 27 (GWL) are HBEAG. A disordered region spans residues 165–212 (NAPILSTLPETTVVRRRGRSPRRRTPSPRRRRSQSPRRRRSQSRESQC). Over residues 178 to 205 (VRRRGRSPRRRTPSPRRRRSQSPRRRRS) the composition is skewed to basic residues. Residues 184 to 190 (SPRRRTP) form a 1; half-length repeat. The interval 184–206 (SPRRRTPSPRRRRSQSPRRRRSQ) is 3 X 8 AA repeats of S-P-R-R-R-R-S-Q. Positions 184–212 (SPRRRTPSPRRRRSQSPRRRRSQSRESQC) are excised as a propeptide. 2 repeat units span residues 191-198 (SPRRRRSQ) and 199-206 (SPRRRRSQ).

It belongs to the orthohepadnavirus precore antigen family. As to quaternary structure, homodimerizes. Post-translationally, phosphorylated. In terms of processing, cleaved by host furin.

The protein resides in the secreted. It localises to the host nucleus. In terms of biological role, may regulate immune response to the intracellular capsid in acting as a T-cell tolerogen, by having an immunoregulatory effect which prevents destruction of infected cells by cytotoxic T-cells. This immune regulation may predispose to chronicity during perinatal infections and prevent severe liver injury during adult infections. This Hepatitis B virus genotype C subtype ayw (isolate China/Tibet127/2002) (HBV-C) protein is External core antigen.